The primary structure comprises 178 residues: Large ribosomal subunit protein uL10 (178 aa).

Belongs to the universal ribosomal protein uL10 family. As to quaternary structure, part of the ribosomal stalk of the 50S ribosomal subunit. The N-terminus interacts with L11 and the large rRNA to form the base of the stalk. The C-terminus forms an elongated spine to which L12 dimers bind in a sequential fashion forming a multimeric L10(L12)X complex.

Its function is as follows. Forms part of the ribosomal stalk, playing a central role in the interaction of the ribosome with GTP-bound translation factors. This chain is Large ribosomal subunit protein uL10, found in Petrotoga mobilis (strain DSM 10674 / SJ95).